A 313-amino-acid chain; its full sequence is Acetaldehyde dehydrogenase 2 (313 aa).

12–15 (SGNI) contributes to the NAD(+) binding site. Catalysis depends on Cys-132, which acts as the Acyl-thioester intermediate. NAD(+)-binding positions include 163-171 (SAGPGTRAN) and Asn-287.

It belongs to the acetaldehyde dehydrogenase family.

The enzyme catalyses acetaldehyde + NAD(+) + CoA = acetyl-CoA + NADH + H(+). This chain is Acetaldehyde dehydrogenase 2 (amnH), found in Paraburkholderia xenovorans (strain LB400).